The sequence spans 434 residues: Serine hydroxymethyltransferase (434 aa).

(6S)-5,6,7,8-tetrahydrofolate contacts are provided by residues L131 and 135-137; that span reads GHL. An N6-(pyridoxal phosphate)lysine modification is found at K240.

The protein belongs to the SHMT family. As to quaternary structure, homodimer. Pyridoxal 5'-phosphate is required as a cofactor.

The protein localises to the cytoplasm. It carries out the reaction (6R)-5,10-methylene-5,6,7,8-tetrahydrofolate + glycine + H2O = (6S)-5,6,7,8-tetrahydrofolate + L-serine. It participates in one-carbon metabolism; tetrahydrofolate interconversion. Its pathway is amino-acid biosynthesis; glycine biosynthesis; glycine from L-serine: step 1/1. Catalyzes the reversible interconversion of serine and glycine with tetrahydrofolate (THF) serving as the one-carbon carrier. This reaction serves as the major source of one-carbon groups required for the biosynthesis of purines, thymidylate, methionine, and other important biomolecules. Also exhibits THF-independent aldolase activity toward beta-hydroxyamino acids, producing glycine and aldehydes, via a retro-aldol mechanism. The chain is Serine hydroxymethyltransferase from Gluconobacter oxydans (strain 621H) (Gluconobacter suboxydans).